A 1241-amino-acid chain; its full sequence is ATP-dependent helicase/nuclease subunit A (1241 aa).

Residues 12 to 485 (SQWTDDQWKA…IDLAKNFRSR (474 aa)) form the UvrD-like helicase ATP-binding domain. 33 to 40 (AAAGSGKT) contacts ATP. Residues 505 to 805 (GEIDYDADAE…RIMTIHKSKG (301 aa)) form the UvrD-like helicase C-terminal domain.

It belongs to the helicase family. AddA subfamily. Heterodimer of AddA and AddB/RexB. Mg(2+) is required as a cofactor.

The catalysed reaction is Couples ATP hydrolysis with the unwinding of duplex DNA by translocating in the 3'-5' direction.. The enzyme catalyses ATP + H2O = ADP + phosphate + H(+). Its function is as follows. The heterodimer acts as both an ATP-dependent DNA helicase and an ATP-dependent, dual-direction single-stranded exonuclease. Recognizes the chi site generating a DNA molecule suitable for the initiation of homologous recombination. The AddA nuclease domain is required for chi fragment generation; this subunit has the helicase and 3' -&gt; 5' nuclease activities. This is ATP-dependent helicase/nuclease subunit A from Bacillus cereus (strain B4264).